Consider the following 428-residue polypeptide: Glutamate-1-semialdehyde 2,1-aminomutase (428 aa).

Lys265 carries the post-translational modification N6-(pyridoxal phosphate)lysine.

The protein belongs to the class-III pyridoxal-phosphate-dependent aminotransferase family. HemL subfamily. In terms of assembly, homodimer. It depends on pyridoxal 5'-phosphate as a cofactor.

The protein localises to the cytoplasm. It carries out the reaction (S)-4-amino-5-oxopentanoate = 5-aminolevulinate. It participates in porphyrin-containing compound metabolism; protoporphyrin-IX biosynthesis; 5-aminolevulinate from L-glutamyl-tRNA(Glu): step 2/2. This chain is Glutamate-1-semialdehyde 2,1-aminomutase, found in Aeromonas hydrophila subsp. hydrophila (strain ATCC 7966 / DSM 30187 / BCRC 13018 / CCUG 14551 / JCM 1027 / KCTC 2358 / NCIMB 9240 / NCTC 8049).